The primary structure comprises 480 residues: 2-phosphoxylose phosphatase 1 (480 aa).

Residues 1 to 6 are Cytoplasmic-facing; sequence MLHRNR. Residues 7 to 27 traverse the membrane as a helical; Signal-anchor for type II membrane protein segment; that stretch reads FLVLLALAGLLAFLSLSLQFF. The Lumenal segment spans residues 28–480; that stretch reads HLIPVSATKN…YYDACHGEGA (453 aa). His97 functions as the Nucleophile in the catalytic mechanism. Asn194, Asn305, and Asn354 each carry an N-linked (GlcNAc...) asparagine glycan. Asp379 acts as the Proton donor in catalysis.

Belongs to the histidine acid phosphatase family. In terms of assembly, interacts with B3GAT3; the interaction increases the 2-phosphoxylose phosphatase activity of PXYLP1 during completion of linkage region formation in a B3GAT3-mediated manner.

It is found in the golgi apparatus membrane. It catalyses the reaction 3-O-[beta-D-GlcA-(1-&gt;3)-beta-D-Gal-(1-&gt;3)-beta-D-Gal-(1-&gt;4)-beta-D-2-O-P-Xyl]-L-seryl-[protein] + H2O = 3-O-(beta-D-GlcA-(1-&gt;3)-beta-D-Gal-(1-&gt;3)-beta-D-Gal-(1-&gt;4)-beta-D-Xyl)-L-seryl-[protein] + phosphate. Functionally, responsible for the 2-O-dephosphorylation of xylose in the glycosaminoglycan-protein linkage region of proteoglycans thereby regulating the amount of mature glycosaminoglycan (GAG) chains. Sulfated glycosaminoglycans (GAGs), including heparan sulfate and chondroitin sulfate, are synthesized on the so-called common GAG-protein linkage region (GlcUAbeta1-3Galbeta1-3Galbeta1-4Xylbeta1-O-Ser) of core proteins, which is formed by the stepwise addition of monosaccharide residues by the respective specific glycosyltransferases. Xylose 2-O-dephosphorylation during completion of linkage region formation is a prerequisite for the initiation and efficient elongation of the repeating disaccharide region of GAG chains. In Mus musculus (Mouse), this protein is 2-phosphoxylose phosphatase 1.